The chain runs to 125 residues: Large ribosomal subunit protein bL12 (125 aa).

This sequence belongs to the bacterial ribosomal protein bL12 family. As to quaternary structure, homodimer. Part of the ribosomal stalk of the 50S ribosomal subunit. Forms a multimeric L10(L12)X complex, where L10 forms an elongated spine to which 2 to 4 L12 dimers bind in a sequential fashion. Binds GTP-bound translation factors.

Functionally, forms part of the ribosomal stalk which helps the ribosome interact with GTP-bound translation factors. Is thus essential for accurate translation. The protein is Large ribosomal subunit protein bL12 of Variovorax paradoxus (strain S110).